We begin with the raw amino-acid sequence, 188 residues long: MAASAFAGAVRAASGILRPLNILASSTYRNCVKNASLISALSTGRFSHIQTPVVSSTPRLTTSERNLTCGHTSVILNRMAPVLPSVLKLPVRSLTYFSARKGKRKTVKAVIDRFLRLHCGLWVRRKAGYKKKLWKKTPARKKRLREFVFCNKTQSKLLDKMTTSFWKRRNWYVDDPYQKYHDRTNLKV.

Belongs to the bacterial ribosomal protein bL35 family. Component of the mitochondrial large ribosomal subunit (mt-LSU). Mature mammalian 55S mitochondrial ribosomes consist of a small (28S) and a large (39S) subunit. The 28S small subunit contains a 12S ribosomal RNA (12S mt-rRNA) and 30 different proteins. The 39S large subunit contains a 16S rRNA (16S mt-rRNA), a copy of mitochondrial valine transfer RNA (mt-tRNA(Val)), which plays an integral structural role, and 52 different proteins.

It is found in the mitochondrion. The chain is Large ribosomal subunit protein bL35m (MRPL35) from Homo sapiens (Human).